Here is a 593-residue protein sequence, read N- to C-terminus: Genetic interactor of prohibitins 3, mitochondrial (593 aa).

A mitochondrion-targeting transit peptide spans 1–61; sequence MLGRIRPFVR…NPSKPGFYRP (61 aa). Residues 142–349 form the CP-type G domain; it reads VESIDKIMST…IVDVPGFSAN (208 aa).

It belongs to the TRAFAC class YlqF/YawG GTPase family. GEP3 subfamily.

The protein resides in the mitochondrion. Functionally, may be involved in the mitochondrial lipid metabolism. The chain is Genetic interactor of prohibitins 3, mitochondrial (GEP3) from Debaryomyces hansenii (strain ATCC 36239 / CBS 767 / BCRC 21394 / JCM 1990 / NBRC 0083 / IGC 2968) (Yeast).